Here is a 273-residue protein sequence, read N- to C-terminus: MRLVILETSDSVGKWAAKYVMKRINDFQPSADRYFVLGLPTGSTPLGMYKELIEFHKQGKVSFQYVKTFNMDEYVGLARDHHESYHYFMWNNFFKHIDIEPKNVHILDGNAADLVAECNKFEDQIREAGGVELFIGGIGPDGHIAFNEPGSSLVSRTRVKTLAQDTLEANARFFDNDMSKVPKQALTVGVGTVMDSKEVMILITGAHKAFALYKAIEEGVNHMWTVSAFQQHANTLMICDEDATLELRVKTVKYFKGILRDLDEGSPLEGYKN.

The Proton acceptor; for enolization step role is filled by aspartate 72. The active-site For ring-opening step is aspartate 141. The active-site Proton acceptor; for ring-opening step is histidine 143. Residue glutamate 148 is the For ring-opening step of the active site.

The protein belongs to the glucosamine/galactosamine-6-phosphate isomerase family. As to quaternary structure, homohexamer.

Its subcellular location is the cytoplasm. It catalyses the reaction alpha-D-glucosamine 6-phosphate + H2O = beta-D-fructose 6-phosphate + NH4(+). It functions in the pathway nucleotide-sugar biosynthesis; UDP-N-acetyl-alpha-D-glucosamine biosynthesis; alpha-D-glucosamine 6-phosphate from D-fructose 6-phosphate: step 1/1. Functionally, catalyzes the reversible conversion of alpha-D-glucosamine 6-phosphate (GlcN-6P) into beta-D-fructose 6-phosphate (Fru-6P) and ammonium ion, a regulatory reaction step in de novo uridine diphosphate-N-acetyl-alpha-D-glucosamine (UDP-GlcNAc) biosynthesis via hexosamine pathway. This chain is Glucosamine-6-phosphate deaminase, found in Drosophila melanogaster (Fruit fly).